A 915-amino-acid chain; its full sequence is Mitogen-activated protein kinase kinae kinase MST11 (915 aa).

3 disordered regions span residues 1 to 65 (MAML…PKHW), 134 to 171 (KKRN…NPSV), and 183 to 249 (GMAY…TRTD). Low complexity predominate over residues 26-45 (AQASYPPSRRAPAVPPASQS). Residues 65 to 128 (WDEDKVCEYL…FLSIKKLRTK (64 aa)) form the SAM domain. Low complexity-rich tracts occupy residues 152–163 (SESPSKPFHSSS) and 188–203 (PSRP…PLPS). The region spanning 263–353 (NQDVIRVIST…NRLILRRVPA (91 aa)) is the Ras-associating domain. One can recognise a Protein kinase domain in the interval 641-911 (WMKGALIGQG…ADDLMLSPFL (271 aa)). Residues 647 to 655 (IGQGSFGCV) and Lys-670 contribute to the ATP site.

This sequence belongs to the protein kinase superfamily. STE Ser/Thr protein kinase family. MAP kinase kinase kinase subfamily. As to quaternary structure, interacts with the adapter protein MST50.

It carries out the reaction L-seryl-[protein] + ATP = O-phospho-L-seryl-[protein] + ADP + H(+). The enzyme catalyses L-threonyl-[protein] + ATP = O-phospho-L-threonyl-[protein] + ADP + H(+). In terms of biological role, mitogen-activated protein kinase kinase kinase; part of the MST11-MST7-PMK1 MAP kinase (MAPK) cascade that is essential for appressorium formation, penetration and invasive growth. The MST11-MST7-PMK1 MAP kinase cascade transduces signals from the cell surface sensors MDB2 and SHO1 that recognize various surface signals such as surface hydrophobicity, cutin monomers, and rice leaf waxes. MST11 acts as the upstream MAPKKK that directly phosphorylates MAPKK MST7. MST11 but not MST7 may also be involved in the OSM1 MAPK pathway in response to osmotic stresses. The chain is Mitogen-activated protein kinase kinae kinase MST11 from Pyricularia oryzae (strain 70-15 / ATCC MYA-4617 / FGSC 8958) (Rice blast fungus).